Consider the following 1377-residue polypeptide: Dicer-like protein 2 (1377 aa).

A Helicase ATP-binding domain is found at 23–203 (MFEASLKENI…MKTLESNLDS (181 aa)). Residue 36 to 43 (MDTGTGKT) participates in ATP binding. The DEAH box signature appears at 144-147 (DEAH). The Helicase C-terminal domain occupies 368 to 531 (ALINFLDKFD…AYQDEERRLR (164 aa)). A Dicer dsRNA-binding fold domain is found at 561-655 (VVTHLYHFCA…LPLTKNPEMR (95 aa)). RNase III domains lie at 914-1052 (RLCA…LDGG) and 1092-1275 (DGDL…VDSG). Positions 1131, 1261, and 1264 each coordinate Mg(2+).

Belongs to the helicase family. Dicer subfamily. Mg(2+) serves as cofactor. It depends on Mn(2+) as a cofactor.

In terms of biological role, dicer-like endonuclease involved in cleaving double-stranded RNA in the RNA interference (RNAi) pathway. Produces 21 to 25 bp dsRNAs (siRNAs) which target the selective destruction of homologous RNAs leading to sequence-specific suppression of gene expression, called post-transcriptional gene silencing (PTGS). Part of a broad host defense response against viral infection and transposons. This chain is Dicer-like protein 2 (dcl2), found in Aspergillus oryzae (strain ATCC 42149 / RIB 40) (Yellow koji mold).